The primary structure comprises 622 residues: MENRIKRPRVDGECVKSINNGEFDRWDVEDTVAYLRGEGLQEWAQIFKDNGITGAGLLCLTEAHLEKMGVSPLGARLHILHCLQKLSQISTEPMKVFNDPIHGHIELHPLLLHFIDTPQFQRLRHIKQLGGTYLVFPGASHNRFEHSIGVGYLAGCLVKALNERQPELFITKQDILCVQIAGLCHDLGHGPFSHMFDGMFIPKARPADKWKHEIASVQMFDHLVEVNGLEAVMLHHGMRLPEDLIFIKEQIAGPLESAVLDQSQWPYKGRPVEKSFLYEVVANKRNGIDVDKWDYFARDCYHLGIQNNFDYQRFLRFARVCEVKGRKHICTRDKEVGNLYDMFHTRNCLHRRAYQHKVGNIIETMITEAFLKADPHIQIQGSSGRIFTISSAIEDMEAYSKLTDHIFEQILYSSGPELSEARAILQNIICRRLYKCVGQTTSETNVDVSQEKLLDWAKELARSKPTGTEGNLIAEDFVVSVIHMDYGMKEKNPINNVHFYCKNDPTKAIKIHKKQVSKLLPERFAEQLIRVYCKKTDDKSLEAAKKYFVQWCMDRNFTKPQDGDIIAPELTPLKQDWHAREDEDEEEEEKHRQNQTLPHHTPQRTGRNVKVDLFQARGETKL.

The region spanning Trp26 to Ile89 is the SAM domain. Lys95 and Val96 together coordinate GTP. Asn98 serves as a coordination point for dGTP. GTP-binding residues include Asp116, Gln121, and Arg124. Gln128, Leu129, Val135, and Arg143 together coordinate dGTP. Gln128 contacts dATP. DCTP is bound at residue Gln128. Gln128 contacts dTTP. Arg143 provides a ligand contact to dATP. Arg143 lines the dCTP pocket. Position 143 (Arg143) interacts with dTTP. In terms of domain architecture, HD spans Arg143–Phe296. Mn(2+) contacts are provided by His146, His185, and Asp186. Residues His189 and His194 each coordinate dATP. DCTP is bound by residues His189 and His194. Residues His189 and His194 each coordinate dTTP. The active site involves His212. Asp291 lines the Mn(2+) pocket. DGTP contacts are provided by Lys292, Tyr295, Asp299, Arg313, Arg332, Lys334, Asn338, Arg346, Tyr354, Gln355, His356, and Lys357. Residues Lys292, Tyr295, and Asp299 each coordinate dATP. The dCTP site is built by Lys292, Tyr295, and Asp299. Positions 292, 295, and 299 each coordinate dTTP. A dATP-binding site is contributed by Arg346. Arg346 provides a ligand contact to dCTP. Gln355 lines the dATP pocket. DCTP is bound at residue Gln355. Gln355 is a dTTP binding site. GTP contacts are provided by Arg431, Lys435, and Lys502. DGTP is bound at residue Lys502. The disordered stretch occupies residues Thr571 to Leu622. Positions Asn594–Gly606 are enriched in polar residues.

This sequence belongs to the SAMHD1 family. As to quaternary structure, homodimer; in absence of GTP and dNTP. Homotetramer; in GTP- and dNTP-bound form. Interacts with rbbp8/CtIP. The cofactor is Zn(2+).

Its subcellular location is the nucleus. It localises to the chromosome. The enzyme catalyses a 2'-deoxyribonucleoside 5'-triphosphate + H2O = a 2'-deoxyribonucleoside + triphosphate + H(+). It carries out the reaction dATP + H2O = 2'-deoxyadenosine + triphosphate + H(+). The catalysed reaction is dCTP + H2O = 2'-deoxycytidine + triphosphate + H(+). It catalyses the reaction dGTP + H2O = 2'-deoxyguanosine + triphosphate + H(+). The enzyme catalyses dTTP + H2O = thymidine + triphosphate + H(+). Its activity is regulated as follows. Allosterically activated and regulated via the combined actions of GTP and dNTPs (dATP, dGTP, dTTP and dCTP): Allosteric site 1 binds GTP, while allosteric site 2 binds dNTP. Allosteric activation promotes the formation of highly active homotetramers. Protein that acts both as a host restriction factor involved in defense response to virus and as a regulator of DNA end resection at stalled replication forks. Has deoxynucleoside triphosphate (dNTPase) activity, which is required to restrict infection by viruses: dNTPase activity reduces cellular dNTP levels to levels too low for retroviral reverse transcription to occur, blocking early-stage virus replication in dendritic and other myeloid cells. Functions during S phase at stalled DNA replication forks to promote the resection of gapped or reversed forks: acts by stimulating the exonuclease activity of MRE11, activating the ATR-CHK1 pathway and allowing the forks to restart replication. Its ability to promote degradation of nascent DNA at stalled replication forks is required to prevent induction of type I interferons, thereby preventing chronic inflammation. Ability to promote DNA end resection at stalled replication forks is independent of dNTPase activity. The sequence is that of Deoxynucleoside triphosphate triphosphohydrolase SAMHD1 from Danio rerio (Zebrafish).